Reading from the N-terminus, the 421-residue chain is 5-hydroxytryptamine receptor 1A (421 aa).

Over 1 to 38 (MDMFSLGQGNNTTTSLEPFGTGGNDTGLSNVTFSYQVI) the chain is Extracellular. N10, N11, N24, and N30 each carry an N-linked (GlcNAc...) asparagine glycan. The helical transmembrane segment at 39–59 (TSLLLGTLIFCAVLGNACVVA) threads the bilayer. Residues 60–73 (AIALERSLQNVANY) are Cytoplasmic-facing. Residues 74 to 98 (LIGSLAVTDLMVSVLVLPMAALYQV) traverse the membrane as a helical segment. The Extracellular portion of the chain corresponds to 99–107 (LNKWTLGQV). Residues 108–132 (TCDLFIALDVLCCTSSILHLCAIAL) form a helical membrane-spanning segment. An intrachain disulfide couples C109 to C187. D116 and C120 together coordinate serotonin. The DRY motif; important for ligand-induced conformation changes motif lies at 133–135 (DRY). The Cytoplasmic portion of the chain corresponds to 133–152 (DRYWAITDPIDYVNKRTPRR). Residues 153–174 (AAALISLTWLIGFLISIPPMLG) traverse the membrane as a helical segment. Topologically, residues 175–193 (WRTPEDRSNPNECTISKDH) are extracellular. A helical transmembrane segment spans residues 194–216 (GYTIYSTFGAFYIPLLLMLVLYG). The Cytoplasmic segment spans residues 217–346 (RIFRAARFRI…LARERKTVKT (130 aa)). The tract at residues 237–268 (GAGTSFGTSSAPPPKKSLNGQPGSGDCRRSAE) is disordered. Residues T314, K345, T346, and G352 each coordinate 1D-myo-inositol 4-phosphate. Residues 347–370 (LGIIMGTFILCWLPFFIVALVLPF) form a helical membrane-spanning segment. Residues 371 to 378 (CESSCHMP) are Extracellular-facing. A helical transmembrane segment spans residues 379–403 (ELLGAIINWLGYSNSLLNPVIYAYF). An NPxxY motif; important for ligand-induced conformation changes and signaling motif is present at residues 396–400 (NPVIY). 1D-myo-inositol 4-phosphate-binding residues include F403, N404, and K405. Residues 404–421 (NKDFQNAFKKIIKCKFCR) lie on the Cytoplasmic side of the membrane.

Belongs to the G-protein coupled receptor 1 family. 5-hydroxytryptamine receptor subfamily. HTR1A sub-subfamily. Heterodimer; heterodimerizes with GPER1. Interacts with YIF1B. Interacts with GPR39 and GALR1. As to expression, most abundantly expressed in midbrain, in dorsal raphe and hippocampus. Detected at lower levels in amygdala and brain cortex.

Its subcellular location is the cell membrane. It localises to the cell projection. The protein localises to the dendrite. G-protein coupled receptor activity is regulated by lipids: phosphatidylinositol 4-phosphate increases HTR1A-mediated activity. Plays a role in the regulation of dopamine and 5-hydroxytryptamine levels in the brain, and thereby affects neural activity, mood and behavior. Plays a role in the response to anxiogenic stimuli. Its function is as follows. G-protein coupled receptor for 5-hydroxytryptamine (serotonin). Also functions as a receptor for various drugs and psychoactive substances. Ligand binding causes a conformation change that triggers signaling via guanine nucleotide-binding proteins (G proteins) and modulates the activity of downstream effectors, such as adenylate cyclase. HTR1A is coupled to G(i)/G(o) G alpha proteins and mediates inhibitory neurotransmission: signaling inhibits adenylate cyclase activity and activates a phosphatidylinositol-calcium second messenger system that regulates the release of Ca(2+) ions from intracellular stores. Beta-arrestin family members regulate signaling by mediating both receptor desensitization and resensitization processes. This Mus musculus (Mouse) protein is 5-hydroxytryptamine receptor 1A (Htr1a).